Consider the following 257-residue polypeptide: 3-methyl-2-oxobutanoate hydroxymethyltransferase (257 aa).

2 residues coordinate Mg(2+): aspartate 44 and aspartate 83. Residues 44–45 (DS), aspartate 83, and lysine 113 contribute to the 3-methyl-2-oxobutanoate site. Residue glutamate 115 coordinates Mg(2+). The active-site Proton acceptor is the glutamate 182.

It belongs to the PanB family. In terms of assembly, homodecamer; pentamer of dimers. The cofactor is Mg(2+).

Its subcellular location is the cytoplasm. It catalyses the reaction 3-methyl-2-oxobutanoate + (6R)-5,10-methylene-5,6,7,8-tetrahydrofolate + H2O = 2-dehydropantoate + (6S)-5,6,7,8-tetrahydrofolate. It functions in the pathway cofactor biosynthesis; (R)-pantothenate biosynthesis; (R)-pantoate from 3-methyl-2-oxobutanoate: step 1/2. In terms of biological role, catalyzes the reversible reaction in which hydroxymethyl group from 5,10-methylenetetrahydrofolate is transferred onto alpha-ketoisovalerate to form ketopantoate. The polypeptide is 3-methyl-2-oxobutanoate hydroxymethyltransferase (Rippkaea orientalis (strain PCC 8801 / RF-1) (Cyanothece sp. (strain PCC 8801))).